We begin with the raw amino-acid sequence, 156 residues long: MKALLIAAGVAALSSTAMAAKLDEKVPYPKADAGFTRQVIHLPKQDTEDAFKVEIIAGKTLEADCNQQRLGGELEEHTLEGWGYSYYRLDKVSGPMSTMMACPGQKKEQRFIPVVGEGFLLRYNSKLPIVVYAPKDVEVRYRIWSASEKVEKAVSE.

An N-terminal signal peptide occupies residues 1–19 (MKALLIAAGVAALSSTAMA). A disulfide bond links C65 and C102.

It belongs to the protease inhibitor I11 (ecotin) family. In terms of assembly, homodimer.

The protein resides in the periplasm. In terms of biological role, general inhibitor of family S1 serine proteases. The polypeptide is Ecotin (Pseudomonas aeruginosa (strain UCBPP-PA14)).